Consider the following 76-residue polypeptide: Small ribosomal subunit protein uS17 (76 aa).

The protein belongs to the universal ribosomal protein uS17 family. Part of the 30S ribosomal subunit.

Functionally, one of the primary rRNA binding proteins, it binds specifically to the 5'-end of 16S ribosomal RNA. The sequence is that of Small ribosomal subunit protein uS17 from Anaplasma phagocytophilum (strain HZ).